Here is a 164-residue protein sequence, read N- to C-terminus: uncharacterized protein (164 aa).

The 133-residue stretch at 26-158 folds into the RDD domain; the sequence is YAGFWVRFWA…DYIADTTVVH (133 aa). 2 helical membrane passes run 35–55 and 66–86; these read AFLLDWLVIWGLNHLLVSPLF and MFTFSAYSVTTLIVYLAYFAL.

It localises to the cell membrane. This is an uncharacterized protein from Bacillus subtilis (strain 168).